The sequence spans 367 residues: Anthranilate phosphoribosyltransferase (367 aa).

Low complexity predominate over residues 1–21 (MALSSESSAASAARRPSGGPA). The disordered stretch occupies residues 1 to 24 (MALSSESSAASAARRPSGGPATSW). 5-phospho-alpha-D-ribose 1-diphosphate contacts are provided by residues Gly104, 107-108 (GD), Thr112, 114-117 (NLST), 132-140 (KHGNRAASS), and Gly144. Gly104 serves as a coordination point for anthranilate. Ser116 is a Mg(2+) binding site. Asn135 provides a ligand contact to anthranilate. Position 190 (Arg190) interacts with anthranilate. The Mg(2+) site is built by Asp248 and Glu249.

It belongs to the anthranilate phosphoribosyltransferase family. Homodimer. The cofactor is Mg(2+).

It catalyses the reaction N-(5-phospho-beta-D-ribosyl)anthranilate + diphosphate = 5-phospho-alpha-D-ribose 1-diphosphate + anthranilate. It participates in amino-acid biosynthesis; L-tryptophan biosynthesis; L-tryptophan from chorismate: step 2/5. In terms of biological role, catalyzes the transfer of the phosphoribosyl group of 5-phosphorylribose-1-pyrophosphate (PRPP) to anthranilate to yield N-(5'-phosphoribosyl)-anthranilate (PRA). This is Anthranilate phosphoribosyltransferase from Mycolicibacterium paratuberculosis (strain ATCC BAA-968 / K-10) (Mycobacterium paratuberculosis).